The chain runs to 152 residues: uncharacterized protein (152 aa).

This is an uncharacterized protein from Mycobacterium tuberculosis (strain ATCC 25618 / H37Rv).